The primary structure comprises 172 residues: Interferon tau-2 (172 aa).

2 disulfide bridges follow: C1/C99 and C29/C139. The N-linked (GlcNAc...) asparagine glycan is linked to N78.

The protein belongs to the alpha/beta interferon family. IFN-alphaII subfamily. As to expression, constitutively and exclusively expressed in the mononuclear cells of the extraembryonic trophectoderm.

Its subcellular location is the secreted. In terms of biological role, paracrine hormone primarily responsible for maternal recognition of pregnancy. Interacts with endometrial receptors, probably type I interferon receptors, and blocks estrogen receptor expression, preventing the estrogen-induced increase in oxytocin receptor expression in the endometrium. This results in the suppression of the pulsatile endometrial release of the luteolytic hormone prostaglandin F2-alpha, hindering the regression of the corpus luteum (luteolysis) and therefore a return to ovarian cyclicity. This, and a possible direct effect of IFN-tau on prostaglandin synthesis, leads in turn to continued ovarian progesterone secretion, which stimulates the secretion by the endometrium of the nutrients required for the growth of the conceptus. In summary, displays particularly high antiviral and antiproliferative potency concurrently with particular weak cytotoxicity, high antiluteolytic activity and immunomodulatory properties. In contrast with other IFNs, IFN-tau is not virally inducible. The chain is Interferon tau-2 (IFNT2) from Bos taurus (Bovine).